The chain runs to 270 residues: MRGQGRKESLSDSRDLDGSYDQLTGHPPGPTKKALKQRFLKLLPCCGPQALPSVSETLAAPASLRPHRPRLLDPDSVDDEFELSTVCHRPEGLEQLQEQTKFTRKELQVLYRGFKNECPSGIVNEENFKQIYSQFFPQGDSSTYATFLFNAFDTNHDGSVSFEDFVAGLSVILRGTVDDRLNWAFNLYDLNKDGCITKEEMLDIMKSIYDMMGKYTYPALREEAPREHVESFFQKMDRNKDGVVTIEEFIESCQKDENIMRSMQLFDNVI.

Basic and acidic residues predominate over residues 1 to 17 (MRGQGRKESLSDSRDLD). Residues 1–32 (MRGQGRKESLSDSRDLDGSYDQLTGHPPGPTK) are disordered. Serine 9 carries the post-translational modification Phosphoserine. 2 S-palmitoyl cysteine lipidation sites follow: cysteine 45 and cysteine 46. One can recognise an EF-hand 1; degenerate domain in the interval 81 to 137 (FELSTVCHRPEGLEQLQEQTKFTRKELQVLYRGFKNECPSGIVNEENFKQIYSQFFP). EF-hand domains lie at 140–175 (DSST…ILRG), 176–211 (TVDD…IYDM), and 224–259 (APRE…DENI). Residues aspartate 153, asparagine 155, aspartate 157, serine 159, aspartate 164, aspartate 189, asparagine 191, aspartate 193, cysteine 195, glutamate 200, aspartate 237, asparagine 239, aspartate 241, and glutamate 248 each coordinate Ca(2+). Positions 257-270 (ENIMRSMQLFDNVI) are interaction with KCND2.

This sequence belongs to the recoverin family. In terms of assembly, component of heteromultimeric potassium channels. Identified in potassium channel complexes containing KCND1, KCND2, KCND3, KCNIP1, KCNIP2, KCNIP3, KCNIP4, DPP6 and DPP10. The KCND2-KCNIP2 channel complex contains four KCND2 and four KCNIP2 subunits. Interacts with KCND2. Probably part of a complex consisting of KCNIP1, KCNIP2 isoform 3 and KCND2. At least isoform 2 and isoform 3 can self-associate to form homodimers and homotetramers. Isoform 3 interacts with KCNIP1 in a calcium-dependent manner. Interacts with KCND3; each KCNIP2 monomer interacts with two adjacent KCND3 subunits, through both the N-terminal inactivation ball of a KCND3 subunit and a C-terminal helix from the adjacent KCND3 subunit, clamping them together; this interaction modulates the channel gating kinetics. Palmitoylated. Palmitoylation enhances association with the plasma membrane. In terms of tissue distribution, expressed in brain. Colocalizes with KCND2 in excitatory neurons including cortical and hippocampal CA1 pyramidal cells. Isoform 3 is expressed in heart and in umbilical vein endothelial cells. Not expressed in fetal heart.

The protein resides in the cell membrane. Its function is as follows. Regulatory subunit of Kv4/D (Shal)-type voltage-gated rapidly inactivating A-type potassium channels. Modulates channel density, inactivation kinetics and rate of recovery from inactivation in a calcium-dependent and isoform-specific manner. Involved in KCND2 and KCND3 trafficking to the cell surface. May be required for the expression of I(To) currents in the heart. This Homo sapiens (Human) protein is A-type potassium channel modulatory protein KCNIP2.